Consider the following 317-residue polypeptide: Acetyl-coenzyme A carboxylase carboxyl transferase subunit alpha (317 aa).

Residues 39-293 form the CoA carboxyltransferase C-terminal domain; it reads RLKKKSISLT…KTSLAQGVAE (255 aa).

Belongs to the AccA family. As to quaternary structure, acetyl-CoA carboxylase is a heterohexamer composed of biotin carboxyl carrier protein (AccB), biotin carboxylase (AccC) and two subunits each of ACCase subunit alpha (AccA) and ACCase subunit beta (AccD).

The protein localises to the cytoplasm. The enzyme catalyses N(6)-carboxybiotinyl-L-lysyl-[protein] + acetyl-CoA = N(6)-biotinyl-L-lysyl-[protein] + malonyl-CoA. It participates in lipid metabolism; malonyl-CoA biosynthesis; malonyl-CoA from acetyl-CoA: step 1/1. In terms of biological role, component of the acetyl coenzyme A carboxylase (ACC) complex. First, biotin carboxylase catalyzes the carboxylation of biotin on its carrier protein (BCCP) and then the CO(2) group is transferred by the carboxyltransferase to acetyl-CoA to form malonyl-CoA. The protein is Acetyl-coenzyme A carboxylase carboxyl transferase subunit alpha of Marinobacter nauticus (strain ATCC 700491 / DSM 11845 / VT8) (Marinobacter aquaeolei).